A 537-amino-acid polypeptide reads, in one-letter code: MFFIINDLKECISALKLKFDDQKELVKLVKNNSFNGFSSTIIFQLKSENHKKIADSIVEWFLKNKKDNYQNVFIANNNFINFQISYQKYLEYLIKTPCFTKKNIKILIESVSANPTGRIHLGHVRIAFFGDVLNNLAKLLGYTTVCEYWVNDYGQQARVFSFSVYQSLQLKKNIAIQQHPDGYSGIVIDKIASEIENFPVDNLNFEEFCKTSFLDHFLVNCTQKVLSLIKSDLNKIHVFIDSWKFESEIVKKTNFNDLLEQLKPNSYFYQDNALWLKTTLYGDDKDRVLIRSDKRASYFGTDVAYHLEKLQRGFDILFNVWGTDHEGHIKRMYCAFDALKNTTKTSLKIFALQLVTLYKNKELVRLSKRAGNVITIETMLSMISEDAARWFMLSQNNGTIIKIDLDIANLQNSANPVYYVQYAFARMNSILRIANSDQLKEITDCSLLINEKEISLLNQLVYYPFMLQKAMETGELHLLTNFLYETASLFHSWYKVCKINDDKNSLLSAQRLALLRSLQFIVKQILDVLKISTPQQM.

The 'HIGH' region signature appears at 113-123 (ANPTGRIHLGH).

Belongs to the class-I aminoacyl-tRNA synthetase family. As to quaternary structure, monomer.

The protein localises to the cytoplasm. The catalysed reaction is tRNA(Arg) + L-arginine + ATP = L-arginyl-tRNA(Arg) + AMP + diphosphate. In Mycoplasma genitalium (strain ATCC 33530 / DSM 19775 / NCTC 10195 / G37) (Mycoplasmoides genitalium), this protein is Arginine--tRNA ligase (argS).